We begin with the raw amino-acid sequence, 293 residues long: MDSQLACPPNVFNYIESNRDEYQLSHDLTEIILQFPSTASQLSARLSRSCMKIDHCVIEFRQQVPINATGSVVVEIHDKRMTDNESLQASWTFPVRCNIDLHYFSSSFFSLKDPIPWKLYYKVCDSNVHQRTHFAKFKGKLKLSTAKHSVDIPFRAPTVKILSKQFTDKDVDFSHVGYGKWDRKMIRSASTSTIGLTGPIELRPGESWASRSTIGPSPSYAGSDQGDAMHPYKHLNRLGTTILDPGESASIIGAERTQSNITMSMVQLNEIVRATVQECINTNCTPSQPKTLQ.

The interval 207–228 (SWASRSTIGPSPSYAGSDQGDA) is disordered. A compositionally biased stretch (polar residues) spans 209–222 (ASRSTIGPSPSYAG).

Belongs to the begomovirus movement protein BC1 family. As to quaternary structure, binds to dimeric supercoiled plasmid DNA. Post-translationally, phosphorylated.

The protein localises to the host cell membrane. It is found in the host microsome membrane. Its subcellular location is the host endoplasmic reticulum membrane. Functionally, movement protein involved in the cell-to-cell and systemic transport of viral genomic DNA. Begomoviruses use 2 proteins to transport their DNA from cell to cell. The nuclear shuttle protein (NSP) shuttles it between nucleus and cytoplasm and the movement protein (MP) probably transports the DNA-NSP complex to the cell periphery and facilitates further movement across the cell wall. The protein is Movement protein BC1 of Tomato golden mosaic virus (strain Yellow vein) (TGMV).